The primary structure comprises 78 residues: Acyl carrier protein (78 aa).

The 76-residue stretch at 1 to 76 (MALFEDIQAV…DVVKYIEDNK (76 aa)) folds into the Carrier domain. S36 bears the O-(pantetheine 4'-phosphoryl)serine mark.

It belongs to the acyl carrier protein (ACP) family. 4'-phosphopantetheine is transferred from CoA to a specific serine of apo-ACP by AcpS. This modification is essential for activity because fatty acids are bound in thioester linkage to the sulfhydryl of the prosthetic group.

The protein localises to the cytoplasm. It participates in lipid metabolism; fatty acid biosynthesis. Functionally, carrier of the growing fatty acid chain in fatty acid biosynthesis. The sequence is that of Acyl carrier protein from Helicobacter pylori (strain J99 / ATCC 700824) (Campylobacter pylori J99).